A 360-amino-acid chain; its full sequence is Cyclin-Y-like protein 2 (360 aa).

Residues 204-286 (RLTAEFAIVS…FLKLINYNIG (83 aa)) form the Cyclin N-terminal domain.

This sequence belongs to the cyclin family. Cyclin Y subfamily.

This chain is Cyclin-Y-like protein 2 (CCNYL2), found in Macaca fascicularis (Crab-eating macaque).